The chain runs to 1882 residues: uncharacterized protein (1882 aa).

The chain crosses the membrane as a helical span at residues 16–36; it reads FFLLFGIIFVLFSIIFLETSI. Disordered regions lie at residues 103-129, 220-306, 492-513, and 658-698; these read DFGS…DVND, FPGD…ESET, VALA…VKDP, and QTDE…TKST. The segment covering 221-239 has biased composition (basic and acidic residues); it reads PGDKGKGEDKKTTKKKSEI. Polar residues predominate over residues 240–249; it reads KQASSATTVL. Composition is skewed to basic and acidic residues over residues 259 to 275, 284 to 294, and 500 to 511; these read TDAK…KDSN, NKDKVWFKSDE, and DKQESSADDGVK. Low complexity predominate over residues 667–698; the sequence is AKTTQGTTDSLTQLADASSSSSSSSTGDTKST. Helical transmembrane passes span 987–1007, 1037–1057, 1080–1100, and 1154–1174; these read ASVV…ILLI, VFAG…AFLL, WISF…ISWI, and LFTY…AGTI. Disordered stretches follow at residues 1233–1253 and 1572–1598; these read DQIQ…EHPY and KDGQ…TSST. Over residues 1234 to 1245 the composition is skewed to low complexity; the sequence is QIQQQQQQQQQQ. Residues 1583 to 1594 show a composition bias toward gly residues; it reads TSSGGGSCGGGS. 4 helical membrane passes run 1759–1779, 1807–1827, 1828–1848, and 1851–1871; these read FLLG…GISM, FFIP…AGLL, VGVQ…VFEF, and YMVG…YFWI.

It belongs to the ABC-4 integral membrane protein family.

The protein resides in the cell membrane. This is an uncharacterized protein from Mycoplasma pneumoniae (strain ATCC 29342 / M129 / Subtype 1) (Mycoplasmoides pneumoniae).